Consider the following 450-residue polypeptide: Acyltransferase GLAUCE (450 aa).

Active-site proton acceptor residues include His-171 and Glu-394.

Belongs to the plant acyltransferase family. Restricted to the central cells of embryo sacs.

The protein localises to the cytoplasm. It is found in the nucleus. Required for double fertilization of the egg cell and the central cell by two sperm cells, resulting in the formation of the embryo and the endosperm. Involved in the regulation of embryonic expression of PHE1. Essential in maternal tissues to ensure the paternal embryonic expression of several genes, including RPS5a and FAC1, both of which being essential for early embryo and endosperm development in fertilized seeds. The protein is Acyltransferase GLAUCE of Arabidopsis thaliana (Mouse-ear cress).